A 122-amino-acid polypeptide reads, in one-letter code: UPF0102 protein Smed_3545 (122 aa).

This sequence belongs to the UPF0102 family.

The sequence is that of UPF0102 protein Smed_3545 from Sinorhizobium medicae (strain WSM419) (Ensifer medicae).